The following is a 102-amino-acid chain: Co-chaperonin GroES (102 aa).

This sequence belongs to the GroES chaperonin family. In terms of assembly, heptamer of 7 subunits arranged in a ring. Interacts with the chaperonin GroEL.

The protein localises to the cytoplasm. In terms of biological role, together with the chaperonin GroEL, plays an essential role in assisting protein folding. The GroEL-GroES system forms a nano-cage that allows encapsulation of the non-native substrate proteins and provides a physical environment optimized to promote and accelerate protein folding. GroES binds to the apical surface of the GroEL ring, thereby capping the opening of the GroEL channel. The chain is Co-chaperonin GroES from Streptomyces coelicolor (strain ATCC BAA-471 / A3(2) / M145).